Here is a 209-residue protein sequence, read N- to C-terminus: Pyroglutamyl-peptidase 1 (209 aa).

Active-site residues include Glu-85, Cys-149, and His-168.

This sequence belongs to the peptidase C15 family. In terms of assembly, monomer.

It localises to the cytoplasm. It carries out the reaction Release of an N-terminal pyroglutamyl group from a polypeptide, the second amino acid generally not being Pro.. Functionally, removes 5-oxoproline from various penultimate amino acid residues except L-proline. This Mus musculus (Mouse) protein is Pyroglutamyl-peptidase 1 (Pgpep1).